We begin with the raw amino-acid sequence, 206 residues long: Glycerol-3-phosphate acyltransferase 1 (206 aa).

5 helical membrane-spanning segments follow: residues 7-27 (LVIG…KIFL), 54-74 (ILTC…VYFI), 81-101 (DLSF…WNHF), 114-134 (IVFF…FLVI), and 155-175 (WINF…IMIF).

This sequence belongs to the PlsY family. As to quaternary structure, probably interacts with PlsX.

It is found in the cell membrane. The enzyme catalyses an acyl phosphate + sn-glycerol 3-phosphate = a 1-acyl-sn-glycero-3-phosphate + phosphate. It functions in the pathway lipid metabolism; phospholipid metabolism. Catalyzes the transfer of an acyl group from acyl-phosphate (acyl-PO(4)) to glycerol-3-phosphate (G3P) to form lysophosphatidic acid (LPA). This enzyme utilizes acyl-phosphate as fatty acyl donor, but not acyl-CoA or acyl-ACP. In Lactobacillus johnsonii (strain CNCM I-12250 / La1 / NCC 533), this protein is Glycerol-3-phosphate acyltransferase 1.